A 1069-amino-acid polypeptide reads, in one-letter code: DNA annealing helicase and endonuclease ZRANB3 (1069 aa).

The Helicase ATP-binding domain occupies 46-208 (VFALRRDGRC…FMQIEALFPQ (163 aa)). The DNA annealing helicase activity stretch occupies residues 46-481 (VFALRRDGRC…GRKEKLQATE (436 aa)). 59–66 (DEMGLGKT) provides a ligand contact to ATP. A DEAH box motif is present at residues 157–160 (DESH). One can recognise a Helicase C-terminal domain in the interval 325–485 (AVKDYIKMLL…KLQATEDDKE (161 aa)). Residues 518-525 (QHDIRSFF) carry the PIP-box motif. The RanBP2-type zinc finger occupies 617-646 (PEKGWQCGFCTFLNNPGLPYCEMCENPRSR). Residues 648 to 720 (AGRNHLQDNN…PEIGQLNNSG (73 aa)) are disordered. 2 stretches are compositionally biased toward basic and acidic residues: residues 652–661 (HLQDNNKNDE) and 677–707 (ECERQCPERLEAEQSANSKEEALEGGGEDRL). Positions 1001-1041 (PGEGHFWQVDHIRPVYEGGGQCSLDNLQTLCTVCHKERTAQ) constitute an HNH domain. Residues 1001 to 1069 (PGEGHFWQVD…SDITRFLVKK (69 aa)) are endonuclease activity. The APIM motif signature appears at 1064 to 1068 (RFLVK).

The protein belongs to the SNF2/RAD54 helicase family. Interacts (via PIP-box and RanBP2-type zinc finger) with PCNA (when PCNA is polyubiquitinated via 'Lys-63'-linked polyubiquitin).

The protein localises to the nucleus. It localises to the chromosome. Its function is as follows. DNA annealing helicase and endonuclease required to maintain genome stability at stalled or collapsed replication forks by facilitating fork restart and limiting inappropriate recombination that could occur during template switching events. Recruited to the sites of stalled DNA replication by polyubiquitinated PCNA and acts as a structure-specific endonuclease that cleaves the replication fork D-loop intermediate, generating an accessible 3'-OH group in the template of the leading strand, which is amenable to extension by DNA polymerase. In addition to endonuclease activity, also catalyzes the fork regression via annealing helicase activity in order to prevent disintegration of the replication fork and the formation of double-strand breaks. This is DNA annealing helicase and endonuclease ZRANB3 (Zranb3) from Mus musculus (Mouse).